A 1134-amino-acid polypeptide reads, in one-letter code: Tyrosine-protein kinase receptor Tie-1 (1134 aa).

The first 22 residues, 1-22 (MVWWGSSLLLPTLFLASHVGAS), serve as a signal peptide directing secretion. Topologically, residues 23 to 755 (VDLTLLANLR…SRAAEEGLDQ (733 aa)) are extracellular. Positions 43–123 (CVSGEAGAGR…VLYVHNSPGA (81 aa)) constitute an Ig-like C2-type 1 domain. 2 N-linked (GlcNAc...) asparagine glycosylation sites follow: Asn-81 and Asn-159. 3 consecutive EGF-like domains span residues 212 to 254 (GCGA…TRCE), 256 to 301 (ACRE…SQCQ), and 303 to 343 (ACAP…VHCE). 9 cysteine pairs are disulfide-bonded: Cys-226/Cys-235, Cys-229/Cys-242, Cys-244/Cys-253, Cys-266/Cys-276, Cys-270/Cys-289, Cys-291/Cys-300, Cys-313/Cys-325, Cys-319/Cys-331, and Cys-333/Cys-342. One can recognise an Ig-like C2-type 2 domain in the interval 349–440 (PQILSMATEV…GQDSRRFKVN (92 aa)). Fibronectin type-III domains are found at residues 444–543 (PPVP…CPEP), 546–638 (QPWL…LPPS), and 642–736 (APRH…LGNG). N-linked (GlcNAc...) asparagine glycosylation is found at Asn-501, Asn-592, and Asn-705. A helical transmembrane segment spans residues 756–780 (QLVLAVVGSVSATCLTILAALLALV). Topologically, residues 781–1134 (CIRRSCLHRR…AGIDATAEEA (354 aa)) are cytoplasmic. Residues 835–1114 (ITFEDLIGEG…RMLEARKAYV (280 aa)) form the Protein kinase domain. ATP-binding positions include 841-849 (IGEGNFGQV) and Lys-866. The Proton acceptor role is filled by Asp-975. Phosphotyrosine; by autocatalysis is present on Tyr-1003.

The protein belongs to the protein kinase superfamily. Tyr protein kinase family. Tie subfamily. As to quaternary structure, heterodimer with TEK/TIE2. Interacts with SVEP1 (via C-terminus). In terms of processing, phosphorylated on tyrosine residues in response to ANGPT1, most likely by TEK/TIE2. Specifically expressed in developing vascular endothelial cells. Abundantly expressed in lung and heart, moderately in brain, liver and kidney, and weakly in thymus, spleen and testis.

The protein localises to the cell membrane. It carries out the reaction L-tyrosyl-[protein] + ATP = O-phospho-L-tyrosyl-[protein] + ADP + H(+). In terms of biological role, transmembrane tyrosine-protein kinase that may modulate TEK/TIE2 activity and contribute to the regulation of angiogenesis. This Mus musculus (Mouse) protein is Tyrosine-protein kinase receptor Tie-1 (Tie1).